A 366-amino-acid chain; its full sequence is UDP-N-acetylglucosamine--N-acetylmuramyl-(pentapeptide) pyrophosphoryl-undecaprenol N-acetylglucosamine transferase (366 aa).

Residues 14–16 (TGG), Asn-125, Arg-168, Ser-196, and Gln-297 contribute to the UDP-N-acetyl-alpha-D-glucosamine site.

The protein belongs to the glycosyltransferase 28 family. MurG subfamily.

It is found in the cell inner membrane. It catalyses the reaction di-trans,octa-cis-undecaprenyl diphospho-N-acetyl-alpha-D-muramoyl-L-alanyl-D-glutamyl-meso-2,6-diaminopimeloyl-D-alanyl-D-alanine + UDP-N-acetyl-alpha-D-glucosamine = di-trans,octa-cis-undecaprenyl diphospho-[N-acetyl-alpha-D-glucosaminyl-(1-&gt;4)]-N-acetyl-alpha-D-muramoyl-L-alanyl-D-glutamyl-meso-2,6-diaminopimeloyl-D-alanyl-D-alanine + UDP + H(+). Its pathway is cell wall biogenesis; peptidoglycan biosynthesis. Cell wall formation. Catalyzes the transfer of a GlcNAc subunit on undecaprenyl-pyrophosphoryl-MurNAc-pentapeptide (lipid intermediate I) to form undecaprenyl-pyrophosphoryl-MurNAc-(pentapeptide)GlcNAc (lipid intermediate II). The protein is UDP-N-acetylglucosamine--N-acetylmuramyl-(pentapeptide) pyrophosphoryl-undecaprenol N-acetylglucosamine transferase of Rhodopseudomonas palustris (strain ATCC BAA-98 / CGA009).